A 448-amino-acid chain; its full sequence is Nucleoprotein (448 aa).

3 stretches are compositionally biased toward polar residues: residues 1–20, 29–38, and 45–55; these read MSFTPGKQSSSRASFGNRSG, QSDQSRNVQT, and PKQTATSQLPS. The disordered stretch occupies residues 1-55; that stretch reads MSFTPGKQSSSRASFGNRSGNGILKWADQSDQSRNVQTRGRRAQPKQTATSQLPS. The interval 52–194 is RNA-binding; it reads QLPSGGNVVP…GYYIEGSGRS (143 aa). Positions 61 to 190 constitute a CoV N NTD domain; the sequence is PYYSWFSGIT…VLPQGYYIEG (130 aa). Arg-106, Arg-122, and Arg-164 together coordinate RNA. Disordered stretches follow at residues 157–231, 266–297, and 385–448; these read TPAD…VTPD, ILNKPRQKRSPNKQCTVQQCFGKRGPNQNFGG, and GMMN…TSEI. Position 167 is a phosphoserine; by host (Ser-167). At Thr-174 the chain carries Phosphothreonine; by host. A Phosphoserine; by host modification is found at Ser-191. A compositionally biased stretch (low complexity) spans 193–223; the sequence is RSAPNSRSTSRASSRASSAGSRSRANSGNRT. Residues 259–384 enclose the CoV N CTD domain; that stretch reads AKEIRQKILN…ENLNAYQQQD (126 aa). Residues 266-276 show a composition bias toward basic residues; it reads ILNKPRQKRSP. The segment at 266-384 is dimerization; that stretch reads ILNKPRQKRS…ENLNAYQQQD (119 aa). Ser-390 carries the post-translational modification Phosphoserine; by host. The span at 399–409 shows a compositional bias: polar residues; that stretch reads QKNGQGENDNI. Positions 422 to 439 are enriched in basic and acidic residues; sequence KSRELTAEDISLLKKMDE. Ser-423 bears the Phosphoserine; by host mark. Thr-427 carries the phosphothreonine; by host modification.

Belongs to the betacoronavirus nucleocapsid protein family. In terms of assembly, homooligomer. Both monomeric and oligomeric forms interact with RNA. Interacts with protein M. Interacts with NSP3; this interaction serves to tether the genome to the newly translated replicase-transcriptase complex at a very early stage of infection. ADP-ribosylated. The ADP-ribosylation is retained in the virion during infection. Post-translationally, phosphorylated on serine and threonine residues.

Its subcellular location is the virion. It localises to the host endoplasmic reticulum-Golgi intermediate compartment. It is found in the host Golgi apparatus. Its function is as follows. Packages the positive strand viral genome RNA into a helical ribonucleocapsid (RNP) and plays a fundamental role during virion assembly through its interactions with the viral genome and membrane protein M. Plays an important role in enhancing the efficiency of subgenomic viral RNA transcription as well as viral replication. The protein is Nucleoprotein of Bos taurus (Bovine).